The chain runs to 183 residues: UPF0098 protein YbcL (183 aa).

Residues 1 to 21 form the signal peptide; sequence MKTLIVSTVLAFITFSAQAAA. C46 and C129 are disulfide-bonded.

Belongs to the UPF0098 family. Homodimer.

It is found in the periplasm. This Escherichia coli (strain K12) protein is UPF0098 protein YbcL (ybcL).